The following is a 346-amino-acid chain: Protein RecA (346 aa).

67–74 (GPESSGKT) lines the ATP pocket.

It belongs to the RecA family.

The protein localises to the cytoplasm. Its function is as follows. Can catalyze the hydrolysis of ATP in the presence of single-stranded DNA, the ATP-dependent uptake of single-stranded DNA by duplex DNA, and the ATP-dependent hybridization of homologous single-stranded DNAs. It interacts with LexA causing its activation and leading to its autocatalytic cleavage. In Frankia alni (strain DSM 45986 / CECT 9034 / ACN14a), this protein is Protein RecA.